A 228-amino-acid chain; its full sequence is Homeobox-leucine zipper protein ATHB-53 (228 aa).

The disordered stretch occupies residues 36 to 62 (DGGEESKPVKRRRKRRSKGSSATNEED). Residues 44–53 (VKRRRKRRSK) are compositionally biased toward basic residues. A DNA-binding region (homeobox) is located at residues 68-127 (GMLRKRKLTDEQVNMLEYSFGNEHKLESGRKEKIAGELGLDPRQVAVWFQNRRARWKNKK). The segment at 128-156 (LEEEYAKLKNHHDNVVLGQCQLESQILKL) is leucine-zipper.

Belongs to the HD-ZIP homeobox family. Class I subfamily. Expressed in root meristem, late flowers and siliques.

It localises to the nucleus. Probable transcription factor that may play a regulatory role in auxin/cytokinin signaling during root development. This is Homeobox-leucine zipper protein ATHB-53 (ATHB-53) from Arabidopsis thaliana (Mouse-ear cress).